The following is an 88-amino-acid chain: Elongation factor 1-beta (88 aa).

It belongs to the EF-1-beta/EF-1-delta family.

In terms of biological role, promotes the exchange of GDP for GTP in EF-1-alpha/GDP, thus allowing the regeneration of EF-1-alpha/GTP that could then be used to form the ternary complex EF-1-alpha/GTP/AAtRNA. This Natronomonas pharaonis (strain ATCC 35678 / DSM 2160 / CIP 103997 / JCM 8858 / NBRC 14720 / NCIMB 2260 / Gabara) (Halobacterium pharaonis) protein is Elongation factor 1-beta.